We begin with the raw amino-acid sequence, 413 residues long: Paxillin homolog 1 (413 aa).

Basic and acidic residues predominate over residues 33–45; the sequence is HISDRRSQSRDDF. The segment at 33–157 is disordered; sequence HISDRRSQSR…PLHSDSMIGT (125 aa). Positions 49–69 are enriched in polar residues; the sequence is YDLQGNLNTQSVSNGNITTSP. Residues 73 to 92 are compositionally biased toward basic and acidic residues; it reads RSSEGKDYSKSQERIYENES. Residues 118-143 are compositionally biased toward polar residues; sequence ASSSRKSLGPPSQAQSYSDVRSNGRS. 4 consecutive LIM zinc-binding domains span residues 174–232, 233–292, 293–350, and 351–410; these read GDCA…NQFS, PKCQ…LFAP, KCNG…ESRG, and SICS…TYAL.

Belongs to the paxillin family. Isoform a: Expressed in all 95 body wall muscle cells as well as in the pharyngeal muscle cells (at protein level). Isoform c: Expressed in the body wall muscle cells and in the pharyngeal muscle cells.

The protein localises to the cell junction. It is found in the adherens junction. The protein resides in the cell membrane. Its subcellular location is the cytoplasm. It localises to the myofibril. The protein localises to the sarcomere. It is found in the m line. The protein resides in the cell projection. Its subcellular location is the podosome. Its function is as follows. Required for myofilament organization of the pharyngeal sarcomeres and for pharyngeal muscle contractions and hence for pharyngeal pumping. Together with lin-8, might be required for myofilament organization in the body wall muscles. The protein is Paxillin homolog 1 (pxl-1) of Caenorhabditis elegans.